Consider the following 75-residue polypeptide: Large ribosomal subunit protein bL32c (75 aa).

A disordered region spans residues 49 to 75 (SPGPTTPIKPNPKKQTGRRPRSQRRRT). Basic residues predominate over residues 59-75 (NPKKQTGRRPRSQRRRT).

The protein belongs to the bacterial ribosomal protein bL32 family.

It is found in the plastid. The protein localises to the chloroplast. The polypeptide is Large ribosomal subunit protein bL32c (Nephroselmis olivacea (Green alga)).